The primary structure comprises 365 residues: Protein RecA (365 aa).

73 to 80 (GPESSGKT) contributes to the ATP binding site.

Belongs to the RecA family.

Its subcellular location is the cytoplasm. Can catalyze the hydrolysis of ATP in the presence of single-stranded DNA, the ATP-dependent uptake of single-stranded DNA by duplex DNA, and the ATP-dependent hybridization of homologous single-stranded DNAs. It interacts with LexA causing its activation and leading to its autocatalytic cleavage. In Prochlorococcus marinus (strain MIT 9301), this protein is Protein RecA.